The primary structure comprises 370 residues: Quinolinate synthase (370 aa).

Positions 62 and 83 each coordinate iminosuccinate. [4Fe-4S] cluster is bound at residue cysteine 128. Residues 154–156 (YAN) and serine 171 each bind iminosuccinate. Cysteine 215 serves as a coordination point for [4Fe-4S] cluster. Iminosuccinate contacts are provided by residues 241-243 (HPE) and threonine 258. Cysteine 312 is a binding site for [4Fe-4S] cluster.

Belongs to the quinolinate synthase family. Type 1 subfamily. Requires [4Fe-4S] cluster as cofactor.

The protein localises to the cytoplasm. It carries out the reaction iminosuccinate + dihydroxyacetone phosphate = quinolinate + phosphate + 2 H2O + H(+). The protein operates within cofactor biosynthesis; NAD(+) biosynthesis; quinolinate from iminoaspartate: step 1/1. Functionally, catalyzes the condensation of iminoaspartate with dihydroxyacetone phosphate to form quinolinate. The chain is Quinolinate synthase from Neisseria meningitidis serogroup C (strain 053442).